The chain runs to 132 residues: ATP synthase epsilon chain, chloroplastic (132 aa).

Belongs to the ATPase epsilon chain family. As to quaternary structure, F-type ATPases have 2 components, CF(1) - the catalytic core - and CF(0) - the membrane proton channel. CF(1) has five subunits: alpha(3), beta(3), gamma(1), delta(1), epsilon(1). CF(0) has three main subunits: a, b and c.

It localises to the plastid. The protein resides in the chloroplast thylakoid membrane. Its function is as follows. Produces ATP from ADP in the presence of a proton gradient across the membrane. This chain is ATP synthase epsilon chain, chloroplastic, found in Calycanthus floridus var. glaucus (Eastern sweetshrub).